Here is a 386-residue protein sequence, read N- to C-terminus: Porin PorA (386 aa).

An N-terminal signal peptide occupies residues 1–35 (MKRTLGHALIIIGAALIVIAVLLPTFLVPRLRVIP). The span at 53–63 (DSSQLGKNEPT) shows a compositional bias: polar residues. The interval 53-78 (DSSQLGKNEPTPNRKNDPRCKAETDE) is disordered. Residues 64–78 (PNRKNDPRCKAETDE) show a composition bias toward basic and acidic residues.

Belongs to the PorA family.

The protein resides in the secreted. The protein localises to the cell wall. In terms of biological role, forms water-filled channels that favor the permeation of cations. The chain is Porin PorA from Corynebacterium amycolatum.